We begin with the raw amino-acid sequence, 766 residues long: Serine/threonine-protein kinase DCLK2 (766 aa).

Residues 1-45 are disordered; that stretch reads MASTRSIELEHFEERDKRPRPGSRRGAPSSSGGSSSSGPKGNGLI. The segment covering 7-19 has biased composition (basic and acidic residues); it reads IELEHFEERDKRP. The span at 24 to 39 shows a compositional bias: low complexity; the sequence is RRGAPSSSGGSSSSGP. T61 is subject to Phosphothreonine. Doublecortin domains follow at residues 72-158 and 197-280; these read KKAR…VDYT and KLVT…AQDD. Composition is skewed to low complexity over residues 300–312 and 324–347; these read AVKYSGSKSPGPS and TPSSQLSTPKSTKSSSSSPTSPGS. The segment at 300–378 is disordered; that stretch reads AVKYSGSKSP…ELDRCISPEG (79 aa). At S362 the chain carries Phosphoserine. One can recognise a Protein kinase domain in the interval 394–651; the sequence is YKIGKVIGDG…AGQILSHPWV (258 aa). Residues 400–408 and K423 contribute to the ATP site; that span reads IGDGNFAVV. The Proton acceptor role is filled by D515. S647 is modified (phosphoserine). Residue T666 is modified to Phosphothreonine. The segment at 707–766 is disordered; that stretch reads CQDSGRPGMEPISPVPPSVEEIPVPGEAVPAPTPPESPTPHPPPAAPGGERAGTWRRHRD. Residues 724 to 736 show a composition bias toward low complexity; it reads SVEEIPVPGEAVP. Over residues 737–752 the composition is skewed to pro residues; the sequence is APTPPESPTPHPPPAA.

It belongs to the protein kinase superfamily. CAMK Ser/Thr protein kinase family. CaMK subfamily. Binds to and stabilizes microtubules. Interacts with MAPK8IP1/JIP-1, MAPK8IP2/JIP-2, MAPK9/JNK2, PPP1R9B/NEURABIN-2 and actin. Post-translationally, autophosphorylated. Expressed in the brain, heart and eyes.

Its subcellular location is the cytoplasm. It is found in the cytoskeleton. It catalyses the reaction L-seryl-[protein] + ATP = O-phospho-L-seryl-[protein] + ADP + H(+). It carries out the reaction L-threonyl-[protein] + ATP = O-phospho-L-threonyl-[protein] + ADP + H(+). Its function is as follows. Protein kinase with a significantly reduced C(a2+)/CAM affinity and dependence compared to other members of the CaMK family. May play a role in the down-regulation of CRE-dependent gene activation probably by phosphorylation of the CREB coactivator CRTC2/TORC2 and the resulting retention of TORC2 in the cytoplasm. This is Serine/threonine-protein kinase DCLK2 (DCLK2) from Homo sapiens (Human).